An 83-amino-acid polypeptide reads, in one-letter code: Hepcidin (83 aa).

The first 23 residues, 1-23, serve as a signal peptide directing secretion; that stretch reads MALSTRTQAACLLLLLLASLSST. The propeptide occupies 24–53; sequence TYLHQQMRQTTELQPLHGEESRADIAIPMQ. 4 disulfide bridges follow: cysteine 65–cysteine 81, cysteine 68–cysteine 71, cysteine 69–cysteine 77, and cysteine 72–cysteine 80.

This sequence belongs to the hepcidin family. Interacts with SLC40A1; this interaction promotes SLC40A1 rapid ubiquitination. As to expression, highly expressed in the liver and to a much lesser extent in the heart. Secreted in blood.

The protein localises to the secreted. Functionally, liver-produced hormone that constitutes the main circulating regulator of iron absorption and distribution across tissues. Acts by promoting endocytosis and degradation of SLC40A1, leading to the retention of iron in iron-exporting cells and decreased flow of iron into plasma. Controls the major flows of iron into plasma: absorption of dietary iron in the intestine, recycling of iron by macrophages, which phagocytose old erythrocytes and other cells, and mobilization of stored iron from hepatocytes. In Mus musculus (Mouse), this protein is Hepcidin (Hamp).